Consider the following 231-residue polypeptide: 5'-methylthioadenosine/S-adenosylhomocysteine nucleosidase (231 aa).

The active-site Proton acceptor is the E12. Substrate is bound by residues G78, V153, and M174–E175. Residue D198 is the Proton donor of the active site.

The protein belongs to the PNP/UDP phosphorylase family. MtnN subfamily.

It carries out the reaction S-adenosyl-L-homocysteine + H2O = S-(5-deoxy-D-ribos-5-yl)-L-homocysteine + adenine. The enzyme catalyses S-methyl-5'-thioadenosine + H2O = 5-(methylsulfanyl)-D-ribose + adenine. The catalysed reaction is 5'-deoxyadenosine + H2O = 5-deoxy-D-ribose + adenine. Its pathway is amino-acid biosynthesis; L-methionine biosynthesis via salvage pathway; S-methyl-5-thio-alpha-D-ribose 1-phosphate from S-methyl-5'-thioadenosine (hydrolase route): step 1/2. Functionally, catalyzes the irreversible cleavage of the glycosidic bond in both 5'-methylthioadenosine (MTA) and S-adenosylhomocysteine (SAH/AdoHcy) to adenine and the corresponding thioribose, 5'-methylthioribose and S-ribosylhomocysteine, respectively. Also cleaves 5'-deoxyadenosine, a toxic by-product of radical S-adenosylmethionine (SAM) enzymes, into 5-deoxyribose and adenine. The protein is 5'-methylthioadenosine/S-adenosylhomocysteine nucleosidase of Vibrio vulnificus (strain CMCP6).